We begin with the raw amino-acid sequence, 141 residues long: Lutropin subunit beta (141 aa).

An N-terminal signal peptide occupies residues 1 to 20 (MEMFQGLLLWLLLNTGGAWA). Cystine bridges form between Cys29/Cys77, Cys43/Cys92, Cys46/Cys130, Cys54/Cys108, Cys58/Cys110, and Cys113/Cys120. Asn33 carries an N-linked (GlcNAc...) asparagine glycan.

The protein belongs to the glycoprotein hormones subunit beta family. In terms of assembly, heterodimer of a common alpha chain and a unique beta chain which confers biological specificity to thyrotropin, lutropin, follitropin and gonadotropin.

It localises to the secreted. In terms of biological role, promotes spermatogenesis and ovulation by stimulating the testes and ovaries to synthesize steroids. The polypeptide is Lutropin subunit beta (LHB) (Ailuropoda melanoleuca (Giant panda)).